The sequence spans 103 residues: Cyclotide vibi-I (103 aa).

An N-terminal signal peptide occupies residues 1 to 9 (AAFALPAFA). The propeptide occupies 10–69 (SFEKDVITPAALEAVLNRKAPLSNIMMENDAILNVIANVKTVISNPVLEEALLKTNHGVN). The cyclopeptide (Gly-Asn) cross-link spans 70–99 (GIPCGESCVWIPCLTSTVGCSCKSKVCYRN). 3 disulfides stabilise this stretch: Cys-73–Cys-89, Cys-77–Cys-91, and Cys-82–Cys-96. A propeptide spanning residues 100–103 (SLDN) is cleaved from the precursor.

Post-translationally, this is a cyclic peptide.

In terms of biological role, probably participates in a plant defense mechanism. This is Cyclotide vibi-I from Viola biflora (Yellow wood violet).